The primary structure comprises 194 residues: uncharacterized protein (194 aa).

Positions 77 to 92 (QTQPQHQTLSQHLPQT) are enriched in polar residues. A disordered region spans residues 77–96 (QTQPQHQTLSQHLPQTHHTD). The helical transmembrane segment at 169–189 (FWEILLLIILIAVLVYGIYWL) threads the bilayer.

Its subcellular location is the host membrane. It localises to the virion. This is an uncharacterized protein from Acanthamoeba polyphaga (Amoeba).